Reading from the N-terminus, the 306-residue chain is Ornithine carbamoyltransferase (306 aa).

Carbamoyl phosphate contacts are provided by residues 54–57, glutamine 81, arginine 105, and 132–135; these read STRT and HPLQ. L-ornithine is bound by residues asparagine 162, aspartate 226, and 230–231; that span reads SM. Carbamoyl phosphate contacts are provided by residues 266-267 and arginine 294; that span reads CL.

It belongs to the aspartate/ornithine carbamoyltransferase superfamily. OTCase family.

It is found in the cytoplasm. The enzyme catalyses carbamoyl phosphate + L-ornithine = L-citrulline + phosphate + H(+). It functions in the pathway amino-acid biosynthesis; L-arginine biosynthesis; L-arginine from L-ornithine and carbamoyl phosphate: step 1/3. Its function is as follows. Reversibly catalyzes the transfer of the carbamoyl group from carbamoyl phosphate (CP) to the N(epsilon) atom of ornithine (ORN) to produce L-citrulline. The protein is Ornithine carbamoyltransferase of Sulfolobus acidocaldarius (strain ATCC 33909 / DSM 639 / JCM 8929 / NBRC 15157 / NCIMB 11770).